The following is a 395-amino-acid chain: ATP phosphoribosyltransferase regulatory subunit (395 aa).

Belongs to the class-II aminoacyl-tRNA synthetase family. HisZ subfamily. As to quaternary structure, heteromultimer composed of HisG and HisZ subunits.

Its subcellular location is the cytoplasm. It participates in amino-acid biosynthesis; L-histidine biosynthesis; L-histidine from 5-phospho-alpha-D-ribose 1-diphosphate: step 1/9. Its function is as follows. Required for the first step of histidine biosynthesis. May allow the feedback regulation of ATP phosphoribosyltransferase activity by histidine. This Ectopseudomonas mendocina (strain ymp) (Pseudomonas mendocina) protein is ATP phosphoribosyltransferase regulatory subunit.